The primary structure comprises 506 residues: Maturase K (506 aa).

The protein belongs to the intron maturase 2 family. MatK subfamily.

Its subcellular location is the plastid. The protein resides in the chloroplast. In terms of biological role, usually encoded in the trnK tRNA gene intron. Probably assists in splicing its own and other chloroplast group II introns. This Rhododendron hippophaeoides (Rhododendron) protein is Maturase K.